The primary structure comprises 332 residues: Beta-1,3-N-acetylglucosaminyltransferase radical fringe (332 aa).

The Cytoplasmic segment spans residues 1-6; it reads MSRARR. Residues 7–29 form a helical; Signal-anchor for type II membrane protein membrane-spanning segment; that stretch reads VLCRACLALAAVLAVLLLLPLPL. Over 30–332 the chain is Lumenal; that stretch reads PLPLPRAPAP…MKNRVEGAFQ (303 aa). Substrate is bound at residue Arg-75. Asn-114 is a glycosylation site (N-linked (GlcNAc...) asparagine). Cystine bridges form between Cys-115–Cys-126 and Cys-144–Cys-208. Asp-148 contacts substrate. A Mn(2+)-binding site is contributed by Asp-149. The active site involves Asp-238. His-262 is a Mn(2+) binding site. The cysteines at positions 312 and 321 are disulfide-linked.

This sequence belongs to the glycosyltransferase 31 family. Requires Mn(2+) as cofactor. In terms of tissue distribution, detected in all the examined tissues (12.5 dpc). High expression found in adult brain.

The protein resides in the golgi apparatus membrane. The catalysed reaction is 3-O-(alpha-L-fucosyl)-L-threonyl-[EGF-like domain protein] + UDP-N-acetyl-alpha-D-glucosamine = 3-O-(N-acetyl-beta-D-glucosaminyl-(1-&gt;3)-alpha-L-fucosyl)-L-threonyl-[EGF-like domain protein] + UDP + H(+). The enzyme catalyses 3-O-(alpha-L-fucosyl)-L-seryl-[EGF-like domain protein] + UDP-N-acetyl-alpha-D-glucosamine = 3-O-(N-acetyl-beta-D-glucosaminyl-(1-&gt;3)-alpha-L-fucosyl)-L-seryl-[EGF-like domain protein] + UDP + H(+). Glycosyltransferase that initiates the elongation of O-linked fucose residues attached to EGF-like repeats in the extracellular domain of Notch molecules. Modulates NOTCH1 activity by modifying O-fucose residues at specific EGF-like domains resulting in enhancement of NOTCH1 activation by DLL1 and JAG1. May be involved in limb formation and in neurogenesis. The chain is Beta-1,3-N-acetylglucosaminyltransferase radical fringe from Mus musculus (Mouse).